A 132-amino-acid chain; its full sequence is ATP synthase epsilon chain (132 aa).

Belongs to the ATPase epsilon chain family. F-type ATPases have 2 components, CF(1) - the catalytic core - and CF(0) - the membrane proton channel. CF(1) has five subunits: alpha(3), beta(3), gamma(1), delta(1), epsilon(1). CF(0) has three main subunits: a, b and c.

Its subcellular location is the cell membrane. Produces ATP from ADP in the presence of a proton gradient across the membrane. The sequence is that of ATP synthase epsilon chain (atpC) from Geobacillus stearothermophilus (Bacillus stearothermophilus).